A 64-amino-acid polypeptide reads, in one-letter code: Conotoxin Im11.4 (64 aa).

A signal peptide spans 1 to 26 (MMFRLTSVSCILLVIAFLNLVGLTNA). Intrachain disulfides connect Cys27-Cys41, Cys34-Cys46, Cys40-Cys50, and Cys45-Cys54. The residue at position 57 (His57) is a Histidine amide. Positions 61–64 (ATFQ) are excised as a propeptide.

It belongs to the conotoxin I2 superfamily. As to expression, expressed by the venom duct.

It localises to the secreted. The polypeptide is Conotoxin Im11.4 (Conus imperialis (Imperial cone)).